A 163-amino-acid polypeptide reads, in one-letter code: ATP synthase subunit b 2 (163 aa).

Residues 5–25 traverse the membrane as a helical segment; the sequence is SLATLWATIALIIFLGVAIYI.

This sequence belongs to the ATPase B chain family. F-type ATPases have 2 components, F(1) - the catalytic core - and F(0) - the membrane proton channel. F(1) has five subunits: alpha(3), beta(3), gamma(1), delta(1), epsilon(1). F(0) has three main subunits: a(1), b(2) and c(10-14). The alpha and beta chains form an alternating ring which encloses part of the gamma chain. F(1) is attached to F(0) by a central stalk formed by the gamma and epsilon chains, while a peripheral stalk is formed by the delta and b chains.

The protein localises to the cell inner membrane. In terms of biological role, f(1)F(0) ATP synthase produces ATP from ADP in the presence of a proton or sodium gradient. F-type ATPases consist of two structural domains, F(1) containing the extramembraneous catalytic core and F(0) containing the membrane proton channel, linked together by a central stalk and a peripheral stalk. During catalysis, ATP synthesis in the catalytic domain of F(1) is coupled via a rotary mechanism of the central stalk subunits to proton translocation. Component of the F(0) channel, it forms part of the peripheral stalk, linking F(1) to F(0). The protein is ATP synthase subunit b 2 of Mesorhizobium japonicum (strain LMG 29417 / CECT 9101 / MAFF 303099) (Mesorhizobium loti (strain MAFF 303099)).